Here is a 532-residue protein sequence, read N- to C-terminus: Bifunctional purine biosynthesis protein PurH (532 aa).

The MGS-like domain occupies 1 to 149; sequence MTDPAPLTRA…KNHGAVTVLT (149 aa).

This sequence belongs to the PurH family.

It catalyses the reaction (6R)-10-formyltetrahydrofolate + 5-amino-1-(5-phospho-beta-D-ribosyl)imidazole-4-carboxamide = 5-formamido-1-(5-phospho-D-ribosyl)imidazole-4-carboxamide + (6S)-5,6,7,8-tetrahydrofolate. The catalysed reaction is IMP + H2O = 5-formamido-1-(5-phospho-D-ribosyl)imidazole-4-carboxamide. It functions in the pathway purine metabolism; IMP biosynthesis via de novo pathway; 5-formamido-1-(5-phospho-D-ribosyl)imidazole-4-carboxamide from 5-amino-1-(5-phospho-D-ribosyl)imidazole-4-carboxamide (10-formyl THF route): step 1/1. Its pathway is purine metabolism; IMP biosynthesis via de novo pathway; IMP from 5-formamido-1-(5-phospho-D-ribosyl)imidazole-4-carboxamide: step 1/1. This is Bifunctional purine biosynthesis protein PurH from Jannaschia sp. (strain CCS1).